Consider the following 155-residue polypeptide: DNA gyrase inhibitor (155 aa).

It belongs to the DNA gyrase inhibitor family. In terms of assembly, interacts with DNA gyrase.

The protein localises to the cytoplasm. Functionally, inhibits the supercoiling activity of DNA gyrase. Acts by inhibiting DNA gyrase at an early step, prior to (or at the step of) binding of DNA by the gyrase. It protects cells against toxins that target DNA gyrase, by inhibiting activity of these toxins and reducing the formation of lethal double-strand breaks in the cell. The chain is DNA gyrase inhibitor from Edwardsiella ictaluri (strain 93-146).